We begin with the raw amino-acid sequence, 136 residues long: Large-conductance mechanosensitive channel (136 aa).

2 helical membrane passes run 10–30 and 76–96; these read FAMRGNVVDLAVGVIIGAAFG and GVFIQNVFDFLIVAFAIFMAI.

It belongs to the MscL family. In terms of assembly, homopentamer.

It is found in the cell inner membrane. Channel that opens in response to stretch forces in the membrane lipid bilayer. May participate in the regulation of osmotic pressure changes within the cell. The polypeptide is Large-conductance mechanosensitive channel (Escherichia coli O139:H28 (strain E24377A / ETEC)).